The following is a 660-amino-acid chain: MEKSKGRKSVSQATVENCMENPGLELMEGGNLEQRYTQEEVTQGHSLEDGLGHSSLWSRRIFQPFTKARSFFERHAGLFRKILLGLLCLAYAAYFLAACILNFQRALALFVITCLVIFILACHFLKKFFPKEQLRCLKPLENTHLNLWAKRVFVGLSVVGLILWLALDTAQRPEQLISFAGICMFILILFACSKHHSAVCWRTVFWGLGLQFIFGILVIRTEPGFNAFQWLGDQIQIFLAYTVEGSSFVFGDTLVQNVFAFQSLPIIIFFGCVMSILYYLGLVQWVIQKVAWFLQITMGTTAAETLAVAGNIFVGMTEAPLLIRPYLADMTISEIHAVMTGGFATIAGTVLGAFISFGIDASSLISASVMAAPCALALSKLVYPEVEESKFKSKEGLKLPRGEERNILEAASNGATDAISLVANVAANLIAFLAVLAFINATLSWLGEMVDIHGLSFQVICSYVLRPMVFMMGVQWADCPLVAEIVGVKFFINEFVAYQQLSQYKNKRLSGVEEWINGEKQWISVKAEIITTFSLCGFANLSSIGITLGGLTSMIPQRKSDLCKIVVRALFTGACVSFISACMAGILYVPRGAETDCVSFLNTNFTNRTYETYVCCRELFQSTSLNGTNMPSFSGPWQDNVSSLRNLASCCDLYTSTVCA.

The residue at position 46 (serine 46) is a Phosphoserine. Transmembrane regions (helical) follow at residues 82–102 (ILLG…CILN), 106–125 (ALAL…CHFL), 150–168 (KRVF…LALD), 174–194 (EQLI…ACSK), 202–222 (RTVF…IRTE), 235–255 (IQIF…DTLV), 262–282 (QSLP…YLGL), 297–316 (TMGT…FVGM), 338–357 (VMTG…FISF), 364–383 (LISA…KLVY), 425–445 (VAAN…TLSW), 456–476 (SFQV…GVQW), 531–551 (TTFS…LGGL), and 569–589 (ALFT…ILYV).

This sequence belongs to the concentrative nucleoside transporter (CNT) (TC 2.A.41) family.

It is found in the membrane. It localises to the apicolateral cell membrane. The catalysed reaction is adenosine(out) + Na(+)(out) = adenosine(in) + Na(+)(in). The enzyme catalyses inosine(out) + Na(+)(out) = inosine(in) + Na(+)(in). It carries out the reaction guanosine(out) + Na(+)(out) = guanosine(in) + Na(+)(in). It catalyses the reaction uridine(out) + Na(+)(out) = uridine(in) + Na(+)(in). Its function is as follows. Sodium-dependent and purine-selective transporter. Exhibits the transport characteristics of the nucleoside transport system cif or N1 subtype (N1/cif) (selective for purine nucleosides and uridine). Plays a critical role in specific uptake and salvage of purine nucleosides in kidney and other tissues. May contribute to regulate the transport of organic compounds in testes across the blood-testis-barrier. This Mus musculus (Mouse) protein is Sodium/nucleoside cotransporter 2 (Slc28a2).